Reading from the N-terminus, the 954-residue chain is Glycine dehydrogenase (decarboxylating) (954 aa).

Over residues 1 to 13 (MTELLQSLSTQNE) the composition is skewed to polar residues. Positions 1–24 (MTELLQSLSTQNEFVARHNGPNKS) are disordered. Lysine 704 bears the N6-(pyridoxal phosphate)lysine mark.

This sequence belongs to the GcvP family. As to quaternary structure, the glycine cleavage system is composed of four proteins: P, T, L and H. Requires pyridoxal 5'-phosphate as cofactor.

The catalysed reaction is N(6)-[(R)-lipoyl]-L-lysyl-[glycine-cleavage complex H protein] + glycine + H(+) = N(6)-[(R)-S(8)-aminomethyldihydrolipoyl]-L-lysyl-[glycine-cleavage complex H protein] + CO2. Functionally, the glycine cleavage system catalyzes the degradation of glycine. The P protein binds the alpha-amino group of glycine through its pyridoxal phosphate cofactor; CO(2) is released and the remaining methylamine moiety is then transferred to the lipoamide cofactor of the H protein. The chain is Glycine dehydrogenase (decarboxylating) from Vibrio campbellii (strain ATCC BAA-1116).